Consider the following 458-residue polypeptide: Retinoic acid receptor alpha-B (458 aa).

Positions methionine 1 to valine 79 are modulating. Positions histidine 48–proline 75 are disordered. The span at tryptophan 49–glutamate 64 shows a compositional bias: polar residues. The segment at residues tyrosine 80 to asparagine 155 is a DNA-binding region (nuclear receptor). 2 consecutive NR C4-type zinc fingers follow at residues cysteine 83–cysteine 103 and cysteine 119–cysteine 138. The tract at residues aspartate 156 to proline 177 is hinge. The NR LBD domain occupies aspartate 178–serine 412. The 9aaTAD motif lies at proline 403 to asparagine 411. The interval asparagine 411–proline 458 is disordered. The segment covering leucine 415–alanine 435 has biased composition (gly residues). The span at proline 436–proline 458 shows a compositional bias: low complexity.

This sequence belongs to the nuclear hormone receptor family. NR1 subfamily. In terms of assembly, heterodimer; with an rxr molecule. Binds DNA preferentially as a rar/rxr heterodimer. In terms of tissue distribution, in the embryo, zygotic expression largely overlaps that of raraa, with high levels in hindbrain, lateral plate mesoderm (LPM) and tail bud, but in later stages rarab is expressed more broadly in the brain, pectoral fin bud and pharyngeal arches.

The protein localises to the nucleus. In terms of biological role, receptor for retinoic acid. Retinoic acid receptors bind as heterodimers to their target response elements in response to their ligands, all-trans or 9-cis retinoic acid, and regulate gene expression in various biological processes. The rar/rxr heterodimers bind to the retinoic acid response elements (RARE) composed of tandem 5'-AGGTCA-3' sites known as DR1-DR5. Required for hindbrain development and, in lateral plate mesoderm, for specification of the pectoral fins. The chain is Retinoic acid receptor alpha-B from Danio rerio (Zebrafish).